The following is a 368-amino-acid chain: Phosphate acyltransferase (368 aa).

Residues 334–368 (AAPLGESGRDANGAGQASPSAGQPAEPSAALSSKT) are disordered.

It belongs to the PlsX family. In terms of assembly, homodimer. Probably interacts with PlsY.

It is found in the cytoplasm. It catalyses the reaction a fatty acyl-[ACP] + phosphate = an acyl phosphate + holo-[ACP]. It functions in the pathway lipid metabolism; phospholipid metabolism. In terms of biological role, catalyzes the reversible formation of acyl-phosphate (acyl-PO(4)) from acyl-[acyl-carrier-protein] (acyl-ACP). This enzyme utilizes acyl-ACP as fatty acyl donor, but not acyl-CoA. The protein is Phosphate acyltransferase of Burkholderia pseudomallei (strain 1106a).